Consider the following 478-residue polypeptide: MGSGWSSEEEERQPLLGPGLGPAPGAARRGREATAVLPAAGPNPGRVYGRRWLVLLLFSLLAFAQGLVWNTWGPIQNSARQAYGFSGWDIALLVLWGPIGFLPCFAFMWLLDKRGLRVTVLLTSFLMVLGTGLRCIPVSDLALKKRLIHGGQILNGLAGPTVMNAAPFLSTTWFSADERATATAIASMLSYLGGACAFLVGPLVVPAPNGTAPLLAAESSRAHIKDRIETVLYAEFGVVCLIFSATLAYFPPRPPLPPSVAAASQRLSYRRSFCRLLSNLRFLMIALAYAIPLGVFAGWSGVLDLILTPVHVSQVDAGWIGFWSIVGGCVVGIAMARFADFIRGMLKLILLLLFSGATLSSTWFTLTCLNSITHLPLTTVTLYASCILLGVFLNSSVPIFFELFVETVYPVPEGITCGVVTFLSNMFMGVLLFFVTFYHTELSWFNWCLPGSCLLSLLLILCFRESYDRLYLDVVVSV.

Positions 1 to 27 (MGSGWSSEEEERQPLLGPGLGPAPGAA) are disordered. Residues 1-51 (MGSGWSSEEEERQPLLGPGLGPAPGAARRGREATAVLPAAGPNPGRVYGRR) lie on the Cytoplasmic side of the membrane. Positions 15 to 16 (LL) match the Di-leucine motif; mediates lysosomal localization motif. The helical transmembrane segment at 52–72 (WLVLLLFSLLAFAQGLVWNTW) threads the bilayer. At 73 to 89 (GPIQNSARQAYGFSGWD) the chain is on the lumenal side. Residues 90–110 (IALLVLWGPIGFLPCFAFMWL) form a helical membrane-spanning segment. Topologically, residues 111–117 (LDKRGLR) are cytoplasmic. Residues 118–138 (VTVLLTSFLMVLGTGLRCIPV) form a helical membrane-spanning segment. Topologically, residues 139 to 152 (SDLALKKRLIHGGQ) are lumenal. A helical transmembrane segment spans residues 153–173 (ILNGLAGPTVMNAAPFLSTTW). Residues 174-184 (FSADERATATA) are Cytoplasmic-facing. The helical transmembrane segment at 185-205 (IASMLSYLGGACAFLVGPLVV) threads the bilayer. Residues 206–229 (PAPNGTAPLLAAESSRAHIKDRIE) lie on the Lumenal side of the membrane. N-linked (GlcNAc...) asparagine glycosylation is present at asparagine 209. A helical transmembrane segment spans residues 230–250 (TVLYAEFGVVCLIFSATLAYF). Topologically, residues 251–281 (PPRPPLPPSVAAASQRLSYRRSFCRLLSNLR) are cytoplasmic. A helical transmembrane segment spans residues 282-302 (FLMIALAYAIPLGVFAGWSGV). Residues 303 to 314 (LDLILTPVHVSQ) lie on the Lumenal side of the membrane. Residues 315–335 (VDAGWIGFWSIVGGCVVGIAM) form a helical membrane-spanning segment. At 336 to 347 (ARFADFIRGMLK) the chain is on the cytoplasmic side. A helical transmembrane segment spans residues 348–368 (LILLLLFSGATLSSTWFTLTC). Over 369–384 (LNSITHLPLTTVTLYA) the chain is Lumenal. Residues 385–405 (SCILLGVFLNSSVPIFFELFV) form a helical membrane-spanning segment. The Cytoplasmic portion of the chain corresponds to 406-414 (ETVYPVPEG). Residues 415–435 (ITCGVVTFLSNMFMGVLLFFV) form a helical membrane-spanning segment. The Lumenal portion of the chain corresponds to 436–442 (TFYHTEL). A helical membrane pass occupies residues 443-463 (SWFNWCLPGSCLLSLLLILCF). Over 464-478 (RESYDRLYLDVVVSV) the chain is Cytoplasmic.

This sequence belongs to the major facilitator superfamily. Post-translationally, cleaved in lysosomes by cathepsin L between Leu-214 and Ala-261, generating a N-glycosylated N-terminal and a non-glycosylated C-terminal fragment.

It localises to the lysosome membrane. It carries out the reaction pyridoxine(out) + n H(+)(out) = pyridoxine(in) + n H(+)(in). Mediates H(+)-dependent pyridoxine transport. The sequence is that of Solute carrier family 49 member 4 (Slc49a4) from Mus musculus (Mouse).